Here is an 828-residue protein sequence, read N- to C-terminus: Periplasmic nitrate reductase (828 aa).

Positions 1-31 (MKLSRRSFMKANAVAAAAAAAGLSVPGVARA) form a signal peptide, tat-type signal. A 4Fe-4S Mo/W bis-MGD-type domain is found at 39 to 95 (IKWDKAPCRFCGTGCGVLVGTQQGRVVACQGDPDAPVNRGLNCIKGYFLPKIMYGKD). Residues Cys46, Cys49, Cys53, and Cys81 each coordinate [4Fe-4S] cluster. Mo-bis(molybdopterin guanine dinucleotide)-binding positions include Lys83, Gln150, Asn175, Cys179, 212 to 219 (WGANMAEM), 243 to 247 (STYQH), 262 to 264 (QSD), Met372, Gln376, Asn482, 508 to 509 (SD), Lys531, Asp558, and 718 to 727 (TGRVLEHWHT). Phe794 serves as a coordination point for substrate. Mo-bis(molybdopterin guanine dinucleotide) contacts are provided by Asn802 and Lys819.

This sequence belongs to the prokaryotic molybdopterin-containing oxidoreductase family. NasA/NapA/NarB subfamily. As to quaternary structure, component of the periplasmic nitrate reductase NapAB complex composed of NapA and NapB. [4Fe-4S] cluster serves as cofactor. Mo-bis(molybdopterin guanine dinucleotide) is required as a cofactor. In terms of processing, predicted to be exported by the Tat system. The position of the signal peptide cleavage has not been experimentally proven.

Its subcellular location is the periplasm. The enzyme catalyses 2 Fe(II)-[cytochrome] + nitrate + 2 H(+) = 2 Fe(III)-[cytochrome] + nitrite + H2O. In terms of biological role, catalytic subunit of the periplasmic nitrate reductase complex NapAB. Receives electrons from NapB and catalyzes the reduction of nitrate to nitrite. This Escherichia coli O7:K1 (strain IAI39 / ExPEC) protein is Periplasmic nitrate reductase.